Here is a 193-residue protein sequence, read N- to C-terminus: Probable nicotinate-nucleotide adenylyltransferase (193 aa).

Belongs to the NadD family.

The catalysed reaction is nicotinate beta-D-ribonucleotide + ATP + H(+) = deamido-NAD(+) + diphosphate. It functions in the pathway cofactor biosynthesis; NAD(+) biosynthesis; deamido-NAD(+) from nicotinate D-ribonucleotide: step 1/1. Its function is as follows. Catalyzes the reversible adenylation of nicotinate mononucleotide (NaMN) to nicotinic acid adenine dinucleotide (NaAD). The polypeptide is Probable nicotinate-nucleotide adenylyltransferase (Coprothermobacter proteolyticus (strain ATCC 35245 / DSM 5265 / OCM 4 / BT)).